The sequence spans 28 residues: Basic phospholipase A2 homolog BmatTX-II (28 aa).

Monomer. In terms of tissue distribution, expressed by the venom gland.

The protein localises to the secreted. Snake venom phospholipase A2 homolog that lacks enzymatic activity. Shows high myotoxic activity, neutrophil activation (demonstrated by activation induction of IL-1beta production), and slight cytotoxicity against Jurkat (leukemia T) and SK-BR-3 (breast adenocarcinoma) tumor cell lines. A model of myotoxic mechanism has been proposed: an apo Lys49-PLA2 is activated by the entrance of a hydrophobic molecule (e.g. fatty acid) at the hydrophobic channel of the protein leading to a reorientation of a monomer. This reorientation causes a transition between 'inactive' to 'active' states, causing alignment of C-terminal and membrane-docking sites (MDoS) side-by-side and putting the membrane-disruption sites (MDiS) in the same plane, exposed to solvent and in a symmetric position for both monomers. The MDoS region stabilizes the toxin on membrane by the interaction of charged residues with phospholipid head groups. Subsequently, the MDiS region destabilizes the membrane with penetration of hydrophobic residues. This insertion causes a disorganization of the membrane, allowing an uncontrolled influx of ions (i.e. calcium and sodium), and eventually triggering irreversible intracellular alterations and cell death. This chain is Basic phospholipase A2 homolog BmatTX-II, found in Bothrops mattogrossensis (Pitviper).